The primary structure comprises 199 residues: Ribonuclease HII (199 aa).

The RNase H type-2 domain occupies 10-199 (RIEAGCDEAG…LLPEQLTLGF (190 aa)). A divalent metal cation contacts are provided by D16, E17, and D108.

The protein belongs to the RNase HII family. Mn(2+) is required as a cofactor. Mg(2+) serves as cofactor.

Its subcellular location is the cytoplasm. The enzyme catalyses Endonucleolytic cleavage to 5'-phosphomonoester.. Endonuclease that specifically degrades the RNA of RNA-DNA hybrids. This chain is Ribonuclease HII, found in Parabacteroides distasonis (strain ATCC 8503 / DSM 20701 / CIP 104284 / JCM 5825 / NCTC 11152).